Reading from the N-terminus, the 182-residue chain is Isopentenyl-diphosphate Delta-isomerase (182 aa).

Positions 25 and 32 each coordinate Mn(2+). One can recognise a Nudix hydrolase domain in the interval 30 to 164 (LLHLAFSSWL…PWAFSPWMVM (135 aa)). Cysteine 67 is an active-site residue. Residue histidine 69 participates in Mn(2+) binding. Glutamate 87 provides a ligand contact to Mg(2+). Residues glutamate 114 and glutamate 116 each contribute to the Mn(2+) site. Glutamate 116 is a catalytic residue.

The protein belongs to the IPP isomerase type 1 family. In terms of assembly, homodimer. It depends on Mg(2+) as a cofactor. Requires Mn(2+) as cofactor.

The protein resides in the cytoplasm. It carries out the reaction isopentenyl diphosphate = dimethylallyl diphosphate. The protein operates within isoprenoid biosynthesis; dimethylallyl diphosphate biosynthesis; dimethylallyl diphosphate from isopentenyl diphosphate: step 1/1. Functionally, catalyzes the 1,3-allylic rearrangement of the homoallylic substrate isopentenyl (IPP) to its highly electrophilic allylic isomer, dimethylallyl diphosphate (DMAPP). In Escherichia coli O17:K52:H18 (strain UMN026 / ExPEC), this protein is Isopentenyl-diphosphate Delta-isomerase.